Consider the following 302-residue polypeptide: Merozoite surface protein 2 (302 aa).

An N-terminal signal peptide occupies residues 1–20; the sequence is MKVIKTLSIINFFIFVTFNI. N-linked (GlcNAc...) asparagine glycosylation is found at Asn22 and Asn36. The interval 44–228 is polymorphic region; that stretch reads EESKPPTGAV…EQTESPELQS (185 aa). Residues 55-60 form a 1; partial repeat; the sequence is GSGAGA. Residues 55-113 form an 8 X 8 AA tandem repeats of G-S-G-A-G-A-V-A region; that stretch reads GSGAGAGSGAGAVAGSGAGAVAGSGAGAVAGSGAGAVAGSGAGAVAGSGAGAVAGSGAG. 6 tandem repeats follow at residues 61–68, 69–76, 77–84, 85–92, 93–100, and 101–108. The stretch at 109–113 is one 8; partial repeat; sequence GSGAG. The tract at residues 114–263 is disordered; that stretch reads NGANPGADAE…DSQKECTDGN (150 aa). The segment covering 125 to 150 has biased composition (low complexity); that stretch reads SPSTPATTTTTTTTNDAEASTSTSSE. Over residues 151 to 167 the composition is skewed to basic and acidic residues; the sequence is NRNHNNAETNPKGKGEV. 2 stretches are compositionally biased toward polar residues: residues 169-195 and 202-230; these read KPNQ…NVPR and KSPT…QSAP. The N-linked (GlcNAc...) asparagine glycan is linked to Asn179. A glycan (N-linked (GlcNAc...) asparagine) is linked at Asn251. Cys259 and Cys267 are disulfide-bonded. 2 N-linked (GlcNAc...) asparagine glycosylation sites follow: Asn275 and Asn276. Residue Asn276 is the site of GPI-anchor amidated asparagine attachment. Residues 277–302 constitute a propeptide, removed in mature form; sequence SSNIASINKFVVLISATLVLSFAIFI.

It is found in the cell membrane. May play a role in the merozoite attachment to the erythrocyte. The sequence is that of Merozoite surface protein 2 from Plasmodium falciparum (isolate tak 9).